The chain runs to 543 residues: Acrosin-binding protein (543 aa).

The signal sequence occupies residues 1–25 (MRKPAAGFLPSLLKVLLLPLAPAAA). The pro-ACR binding stretch occupies residues 26–106 (QDSTQASTPG…ASWFESFCQF (81 aa)). The propeptide at 26-273 (QDSTQASTPG…NPSSFAPRVR (248 aa)) is removed in mature form. The tract at residues 185–272 (SLGGQEQAPE…SNPSSFAPRV (88 aa)) is disordered. Basic and acidic residues predominate over residues 192-220 (APEHKQEQGVEHRQEPTQEHKQEEGQKQE). Positions 221 to 231 (EQEEEQEEEGK) are enriched in acidic residues. Residues 232–243 (QEEGQGTKEGRE) are compositionally biased toward basic and acidic residues. Residues 319–427 (LPHTEALLVL…NQVGSPESGR (109 aa)) form a pro-ACR binding region.

As to quaternary structure, binds proacrosin (pro-ACR). Does not bind the mature form of ACR. Phosphorylated on Tyr residues in capacitated sperm. In terms of processing, the N-terminus is blocked. Post-translationally, synthesized as a 60-kDa precursor, the 32-kDa mature form is post-translationally produced by the removal of the N-terminal half of the precursor during sperm maturation in the testis and/or epididymis. In terms of tissue distribution, expression restricted to testis in normal tissue. Expressed in a wide spectrum of cancers, including bladder, breast, liver, lung and colon cancers.

The protein localises to the secreted. It is found in the cytoplasmic vesicle. It localises to the secretory vesicle. Its subcellular location is the acrosome. Acrosomal protein that maintains proacrosin (pro-ACR) as an enzymatically inactive zymogen in the acrosome. Involved also in the acrosome formation. In Homo sapiens (Human), this protein is Acrosin-binding protein.